Reading from the N-terminus, the 607-residue chain is MYPPRRIEIPCKPGVYRFEDENGRILYVGKAKNLRNRLGSYFTNARRGRRISYMLSISKKVGWTCVADDIEALRLEYSWIKEFAPPCNVKLKDDKAYPFLAVTIGEQVPRLLITRRKIQYATHFGPYPKVFHLRETVSLLHKIFQIRTCSPTNYKRAIASGMPCFEGQINKCFGPCSLKTTHLQYQKRIKNLMAFLEGQSSSLLESLKKKMLKASKNKEYEEAAILRDKIQAAQTVLSRSAVLLDETVSADFIAVVSDNSIASVQCFRVIAGRIKSVYSWHFEQQEDQSASELLSQSIIQVYDKLSLPKRIVLFDKPSYLSALSAHLNDKNIDRSLEIEIVYHPNEQERRLLETVKDNALSELERHRLRRSSDYTERHRSLFELQKYLNLNSLPVRIECFDISHLSGTNTSGSMVVFENGEPKKSAYRHFNIHIDQNNDTASMFSLICRRLRSLESVAQDSPDYPHLMIIDGGKPQLSAAVGALQEVGLKIPVFALSKRLEELWSPGVKTSLILPPNSESLFLLQKIRDESHRFALKQQTRRREAYLTSELFRIPGLGKQKVMQLLRRFSSFAEIRQASIEDISALPGFGVKTAEKIKECAEAFSLK.

One can recognise a GIY-YIG domain in the interval 11–89 (CKPGVYRFED…IKEFAPPCNV (79 aa)). The UVR domain occupies 201–236 (SSLLESLKKKMLKASKNKEYEEAAILRDKIQAAQTV).

It belongs to the UvrC family. In terms of assembly, interacts with UvrB in an incision complex.

It localises to the cytoplasm. The UvrABC repair system catalyzes the recognition and processing of DNA lesions. UvrC both incises the 5' and 3' sides of the lesion. The N-terminal half is responsible for the 3' incision and the C-terminal half is responsible for the 5' incision. This Tropheryma whipplei (strain TW08/27) (Whipple's bacillus) protein is UvrABC system protein C.